The sequence spans 72 residues: C-hordein (72 aa).

The segment covering 1–36 (FPQPQEPFPQQPQQPFPLQPQQPFPQQPQQPFPQPQ) has biased composition (pro residues). Residues 1 to 61 (FPQPQEPFPQ…QQPFPLQPHQ (61 aa)) are disordered. Low complexity predominate over residues 37–50 (QPFRQQAELIIPQQ).

Developing endosperm.

Functionally, sulfur-poor seed storage protein. The protein is C-hordein of Hordeum vulgare (Barley).